A 458-amino-acid polypeptide reads, in one-letter code: Transcription factor Atf1 (458 aa).

Residues 347–410 (EEKRRNFLER…VNLKTLLLAH (64 aa)) form the bZIP domain. Residues 349 to 378 (KRRNFLERNRVAALKCRQRKKQWLANLQNK) form a basic motif region. The interval 389 to 403 (LTATVTQLREEIVNL) is leucine-zipper.

It belongs to the bZIP family.

The protein localises to the nucleus. Functionally, transcription factor that positively regulates vegetative growth, reproduction, and osmotic stress response. In Penicillium expansum (Blue mold rot fungus), this protein is Transcription factor Atf1.